We begin with the raw amino-acid sequence, 360 residues long: Sorbitol dehydrogenase (360 aa).

Residue Cys-42 coordinates Zn(2+). Tyr-48 serves as a coordination point for substrate. Zn(2+)-binding residues include His-67 and Glu-68. Glu-153 is a binding site for substrate. NAD(+)-binding positions include Asp-201, Arg-206, 277–279, and 301–303; these read AGN and SFR. Substrate is bound by residues Arg-303 and Tyr-304.

This sequence belongs to the zinc-containing alcohol dehydrogenase family. As to quaternary structure, homotetramer. Zn(2+) serves as cofactor.

It carries out the reaction keto-D-fructose + NADH + H(+) = D-sorbitol + NAD(+). In terms of biological role, polyol dehydrogenase that catalyzes the reversible NAD(+)-dependent oxidation of various sugar alcohols. Is active with D-sorbitol (D-glucitol) as substrate, leading to the C2-oxidized product D-fructose. Suppresses growth arrest induced by a p53 tumor mutant in fission yeast. This is Sorbitol dehydrogenase (tms1) from Schizosaccharomyces pombe (strain 972 / ATCC 24843) (Fission yeast).